The following is a 99-amino-acid chain: Nucleoid-associated protein str1598 (99 aa).

The protein belongs to the YbaB/EbfC family. Homodimer.

The protein resides in the cytoplasm. The protein localises to the nucleoid. In terms of biological role, binds to DNA and alters its conformation. May be involved in regulation of gene expression, nucleoid organization and DNA protection. The sequence is that of Nucleoid-associated protein str1598 from Streptococcus thermophilus (strain CNRZ 1066).